The primary structure comprises 145 residues: Ribonuclease H (145 aa).

The 141-residue stretch at 1–141 folds into the RNase H type-1 domain; the sequence is MQEVTIYSDG…ADALANRGVA (141 aa). Mg(2+)-binding residues include aspartate 9, glutamate 47, aspartate 69, and aspartate 133.

This sequence belongs to the RNase H family. As to quaternary structure, monomer. Mg(2+) serves as cofactor.

Its subcellular location is the cytoplasm. The catalysed reaction is Endonucleolytic cleavage to 5'-phosphomonoester.. Endonuclease that specifically degrades the RNA of RNA-DNA hybrids. The protein is Ribonuclease H of Cupriavidus metallidurans (strain ATCC 43123 / DSM 2839 / NBRC 102507 / CH34) (Ralstonia metallidurans).